Consider the following 404-residue polypeptide: Short chain dehydrogenase sirR (404 aa).

A signal peptide spans methionine 1–threonine 28. Residues serine 56 and leucine 58 each coordinate NADP(+). 2 N-linked (GlcNAc...) asparagine glycosylation sites follow: asparagine 67 and asparagine 157. The active-site Proton donor is the serine 237. N-linked (GlcNAc...) asparagine glycosylation is present at asparagine 274. Valine 291 provides a ligand contact to NADP(+).

The protein belongs to the short-chain dehydrogenases/reductases (SDR) family. Highly divergent.

Its pathway is mycotoxin biosynthesis. Functionally, short chain dehydrogenase; part of the gene cluster that mediates the biosynthesis of sirodesmin PL, an epipolythiodioxopiperazine (ETP) characterized by a disulfide bridged cyclic dipeptide and that acts as a phytotoxin which is involved in the blackleg didease of canola. SirD catalyzes the O-prenylation of L-tyrosine (L-Tyr) in the presence of dimethylallyl diphosphate (DMAPP) to yield 4-O-dimethylallyl-L-Tyr, and therefore represents probably the first pathway-specific enzyme in the biosynthesis of sirodesmin PL. 4-O-dimethylallyl-L-Tyr, then undergoes condensation with L-Ser in a reaction catalyzed by the non-ribosomal peptide synthase sirP to form the diketopiperazine (DKP) backbone. Further bishydroxylation of the DKP performed by the cytochrome P450 monooxygenase sirC leads to the production of the intermediate phomamide. This step is essential to form the reactive thiol group required for toxicity of sirodesmin PL. The next steps of sirodesmin biosynthesis are not well understood yet, but some predictions could be made from intermediate compounds identification. Phomamide is converted into phomalizarine via oxidation, probably by sirT. Further oxidation, methylation (by sirM or sirN) and reduction steps convert phomalizarine to deacetyl sirodesmin. Finally, acetyltransferase sirH probably acetylates deacetyl sirodesmin to produce sirodesmin PL. The chain is Short chain dehydrogenase sirR from Leptosphaeria maculans (Blackleg fungus).